The sequence spans 1115 residues: G-protein coupled receptor GRL101 (1115 aa).

Residues 1–24 (MATMSGTTIVCLIYLTTMLGNSQG) form the signal peptide. At 25–767 (VNLKIESPSP…SCEDLMSNHV (743 aa)) the chain is on the extracellular side. LDL-receptor class A domains lie at 36–79 (TLCS…TCGC), 77–115 (CGCLQSEFQCNHTTCIDKILRCDRNDDCSNGLDERECDI), 116–155 (YICPLGTHVKWHNHFCVPRDKQCDFLDDCGDNSDEKICER), 156–196 (RECV…ACDS), 195–232 (DSDKYFQCAEGSLIKKEFVCDGWVDCKLTFADELNCKL), 231–269 (KLCDEDDFRCSDTRCIQKSNVCDGYCDCKTCDDEEVCAN), 272–318 (YGCP…YCSN), 320–363 (SECK…SCLA), 365–403 (PKCSQDEFQCHHGKCIPISKRCDSVHDCVDWSDEMNCEN), 404–442 (HQCAANMKSCLSGHCIEEHKWCNFHRECPDGSDEKDCDP), 444–485 (PVCE…NCSQ), and 486–525 (HICLEGQFRCRKSFCINQTKVCDGTVDCLQGMWDENNCRY). 16 cysteine pairs are disulfide-bonded: C38-C53, C46-C66, C60-C77, C79-C91, C86-C104, C98-C113, C118-C131, C138-C153, C158-C170, C165-C183, C177-C194, C202-C220, C214-C230, C233-C245, C240-C258, and C252-C267. A glycan (N-linked (GlcNAc...) asparagine) is linked at N87. N166 is a glycosylation site (N-linked (GlcNAc...) asparagine). N-linked (GlcNAc...) asparagine glycosylation is present at N269. Disulfide bonds link C274-C291, C282-C304, and C298-C316. A glycan (N-linked (GlcNAc...) asparagine) is linked at N318. Cystine bridges form between C322–C339, C334–C352, C346–C361, C367–C379, C374–C392, C386–C401, C406–C418, C413–C431, C425–C440, C446–C458, C453–C474, C465–C483, C488–C500, C495–C513, and C507–C523. An N-linked (GlcNAc...) asparagine glycan is attached at N482. N-linked (GlcNAc...) asparagine glycosylation occurs at N502. The LRRNT domain occupies 518–562 (WDENNCRYWCPHGQAICQCEGVTMDCTGQKLKEMPVQQMEEDLSK). The N-linked (GlcNAc...) asparagine glycan is linked to N571. LRR repeat units lie at residues 584-605 (KVTYLDLSRNHLTEIPIYSFQN), 608-629 (KLTHLNLADNNITSLKNGSLLG), 632-653 (NLKQLHINGNKIETIEEDTFSS), 656-677 (HLTVLDLSNQRLTHVYKNMFKG), 680-701 (QITVLNISRNQINSIDNGAFNN), and 704-725 (NVRLIDLSGNVIKDIGQKVFMG). 2 N-linked (GlcNAc...) asparagine glycosylation sites follow: N618 and N624. The N-linked (GlcNAc...) asparagine glycan is linked to N685. Residues 768–788 (LRVSIWVLGVIALVGNFVVIF) traverse the membrane as a helical segment. Residues 789–801 (WRVRDFRGGKVHS) are Cytoplasmic-facing. The chain crosses the membrane as a helical span at residues 802 to 822 (FLITNLAIGDFLMGVYLLIIA). Residues 823 to 857 (TADTYYRGVYISHDENWKQSGLCQFAGFVSTFSSE) are Extracellular-facing. A helical transmembrane segment spans residues 858–878 (LSVLTLSTITLDRLICILFPL). The Cytoplasmic segment spans residues 879–887 (RRTRLGLRQ). The chain crosses the membrane as a helical span at residues 888 to 908 (AIIVMSCIWVLVFLLAVLPLL). Topologically, residues 909 to 941 (GFSYFENFYGRSGVCLALHVTPDRRPGWEYSVG) are extracellular. A helical membrane pass occupies residues 942 to 962 (VFILLNLLSFVLIASSYLWMF). The Cytoplasmic portion of the chain corresponds to 963–988 (SVAKKTRSAVRTAESKNDNAMARRMT). The helical transmembrane segment at 989-1009 (LIVMTDFCCWVPIIVLGFVSL) threads the bilayer. The Extracellular portion of the chain corresponds to 1010 to 1017 (AGARADDQ). Residues 1018–1038 (VYAWIAVFVLPLNSATNPVIY) traverse the membrane as a helical segment. Over 1039 to 1115 (TLSTAPFLGN…YYNTELHSDS (77 aa)) the chain is Cytoplasmic.

The protein belongs to the G-protein coupled receptor 1 family. In terms of tissue distribution, predominantly expressed in a small number of neurons within the central nervous system and to a lesser extent in the heart.

It localises to the cell membrane. Functionally, might directly transduce signals carried by large extracellular lipoprotein complexes into neuronal events. The sequence is that of G-protein coupled receptor GRL101 from Lymnaea stagnalis (Great pond snail).